The sequence spans 178 residues: ATP synthase subunit delta (178 aa).

Belongs to the ATPase delta chain family. In terms of assembly, F-type ATPases have 2 components, F(1) - the catalytic core - and F(0) - the membrane proton channel. F(1) has five subunits: alpha(3), beta(3), gamma(1), delta(1), epsilon(1). F(0) has three main subunits: a(1), b(2) and c(10-14). The alpha and beta chains form an alternating ring which encloses part of the gamma chain. F(1) is attached to F(0) by a central stalk formed by the gamma and epsilon chains, while a peripheral stalk is formed by the delta and b chains.

The protein localises to the cell inner membrane. Functionally, f(1)F(0) ATP synthase produces ATP from ADP in the presence of a proton or sodium gradient. F-type ATPases consist of two structural domains, F(1) containing the extramembraneous catalytic core and F(0) containing the membrane proton channel, linked together by a central stalk and a peripheral stalk. During catalysis, ATP synthesis in the catalytic domain of F(1) is coupled via a rotary mechanism of the central stalk subunits to proton translocation. This protein is part of the stalk that links CF(0) to CF(1). It either transmits conformational changes from CF(0) to CF(1) or is implicated in proton conduction. The polypeptide is ATP synthase subunit delta (Hydrogenovibrio crunogenus (strain DSM 25203 / XCL-2) (Thiomicrospira crunogena)).